The chain runs to 457 residues: Putative metabolite transport protein YwtG (457 aa).

The next 12 membrane-spanning stretches (helical) occupy residues 7–27 (IWLY…TGVI), 38–58 (LGLN…GAIL), 75–95 (AIMA…LAPN), 97–117 (GVMV…TTIV), 136–156 (LNQL…YIFA), 163–183 (WMLG…LFMP), 240–260 (ALIA…NTII), 276–296 (ASIL…LVAI), 309–329 (LFGN…NLFF), 340–360 (VICL…VVWV), 377–397 (VSTL…PILM), and 400–420 (IGIS…FLFV). The interval 438–457 (DLRDKNGQGGAAGKQQTVGT) is disordered.

Belongs to the major facilitator superfamily. Sugar transporter (TC 2.A.1.1) family.

Its subcellular location is the cell membrane. This chain is Putative metabolite transport protein YwtG (ywtG), found in Bacillus subtilis (strain 168).